We begin with the raw amino-acid sequence, 258 residues long: Phosphate import ATP-binding protein PstB 1 (258 aa).

An ABC transporter domain is found at 5 to 247 (LDLTDVNIYY…EKIFSNPNQK (243 aa)). 37–44 (GPSGCGKT) is a binding site for ATP.

It belongs to the ABC transporter superfamily. Phosphate importer (TC 3.A.1.7) family. In terms of assembly, the complex is composed of two ATP-binding proteins (PstB), two transmembrane proteins (PstC and PstA) and a solute-binding protein (PstS).

The protein localises to the cell membrane. It catalyses the reaction phosphate(out) + ATP + H2O = ADP + 2 phosphate(in) + H(+). In terms of biological role, part of the ABC transporter complex PstSACB involved in phosphate import. Responsible for energy coupling to the transport system. This chain is Phosphate import ATP-binding protein PstB 1, found in Mycobacterium bovis (strain ATCC BAA-935 / AF2122/97).